A 1154-amino-acid chain; its full sequence is MQAMEGEVLLPALYEEEEEEEEEEEEVEEEEEQVQKGGSVGSLSVNKHRGLSLTETELEELRAQVLQLVAELEETRELAGQHEDDSLELQGLLEDERLASAQQAEVFTKQIQQLQGELRSLREEISLLEHEKESELKEIEQELHLAQAEIQSLRQAAEDSATEHESDIASLQEDLCRMQNELEDMERIRGDYEMEIASLRAEMEMKSSEPSGSLGLSDYSGLQEELQELRERYHFLNEEYRALQESNSSLTGQLADLESERTQRATERWLQSQTLSMTSAESQTSEMDFLEPDPEMQLLRQQLRDAEEQMHGMKNKCQELCCELEELQHHRQVSEEEQRRLQRELKCAQNEVLRFQTSHSVTQNEELKSRLCTLQKKYDTSQDEQNELLKMQLQLQTELRQLKVMKSTLVENQSEKELLCRLQKLHLQHQNVTCEKEKLLERQQQLQEELQCHEAELQHLRDTVASFKESNEKDTETHAQLQEMKQLYQASKDELERQKHMYDQLEQDLLLCQLELKELKASHPIPEDKGKCANKCDTLLSRLTELQEKYKASQKEMGQLQMEQCELLEDQRRMQEEQGQLQEELHRLTLPLPKSGLLLKSQELLTKLEDLCELQLLYQGMQEEQKKLIQNQDCVLKEQLEIHEELRRFKESHFQEVLENPDDSKLAKSSKCNRNKQSKLLMEQMQALQVMYDAGQAKQELLQQEQGRLLEERKRLQADLQLCLEEMQLLQVQSPSIKMSLESYGKSYGSMVPSNENCRKTYDTTVDDNESYYKSYTSTQTSSKSFLKSYDSSTSASEAYGKSYCTTSNSSITYKKSYGSTSSSDTCQKSFVSSCTDEEPAEPEDMERFEEMVVKVLIKLQAVQAMYQISQEEHSQLQEQMEKLLAKQKDLKEELDACEREFKECMECLEKPMAPQNDKNEIKELQTKLRELQLQYQASMDEQGRLLVVQEQLEGQLQCCQEELRQLREKRPSVVKEARGKNANKNMNKNANGVKMKKVTKPCSDTSESDLETRKSLEVVLYYKASQRKLDGLAKEEEKKEEMEEEKKQVKEEAKEQCGDELVAEPADPEEAKSTEDQEENEEDKEEEEKEEDSEEEEDDADSSLESPEENNPLRLSESKKSSPTPNPPIFSLPLVGLVVISALLWCWWAETSS.

Positions 1–48 (MQAMEGEVLLPALYEEEEEEEEEEEEVEEEEEQVQKGGSVGSLSVNKH) are disordered. Acidic residues predominate over residues 14–32 (YEEEEEEEEEEEEVEEEEE). Ser-52 is subject to Phosphoserine. 2 coiled-coil regions span residues 696–733 (QAKQ…LQVQ) and 859–974 (KLQA…RPSV). Residues 1031-1058 (DGLAKEEEKKEEMEEEKKQVKEEAKEQC) show a composition bias toward basic and acidic residues. The segment at 1031–1131 (DGLAKEEEKK…SSPTPNPPIF (101 aa)) is disordered. Acidic residues predominate over residues 1077 to 1109 (DQEENEEDKEEEEKEEDSEEEEDDADSSLESPE). A helical transmembrane segment spans residues 1130–1150 (IFSLPLVGLVVISALLWCWWA).

In terms of tissue distribution, expressed in gastric tissues. Down-regulated in gastric cancer.

The protein localises to the cytoplasmic vesicle. It localises to the secretory vesicle. Its subcellular location is the acrosome membrane. May play a role in acrosome formation in spermatogenesis and in fertilization. The protein is Coiled-coil domain-containing protein 136 (CCDC136) of Homo sapiens (Human).